The primary structure comprises 360 residues: Peptide chain release factor 1 (360 aa).

At glutamine 235 the chain carries N5-methylglutamine.

It belongs to the prokaryotic/mitochondrial release factor family. Methylated by PrmC. Methylation increases the termination efficiency of RF1.

It is found in the cytoplasm. Its function is as follows. Peptide chain release factor 1 directs the termination of translation in response to the peptide chain termination codons UAG and UAA. In Mannheimia succiniciproducens (strain KCTC 0769BP / MBEL55E), this protein is Peptide chain release factor 1.